Reading from the N-terminus, the 309-residue chain is Aspartate carbamoyltransferase catalytic subunit (309 aa).

Residues arginine 54 and threonine 55 each contribute to the carbamoyl phosphate site. Residue lysine 82 coordinates L-aspartate. Residues arginine 104, histidine 132, and glutamine 135 each contribute to the carbamoyl phosphate site. L-aspartate is bound by residues arginine 165 and arginine 219. 2 residues coordinate carbamoyl phosphate: glycine 260 and proline 261.

The protein belongs to the aspartate/ornithine carbamoyltransferase superfamily. ATCase family. Heterododecamer (2C3:3R2) of six catalytic PyrB chains organized as two trimers (C3), and six regulatory PyrI chains organized as three dimers (R2).

The catalysed reaction is carbamoyl phosphate + L-aspartate = N-carbamoyl-L-aspartate + phosphate + H(+). The protein operates within pyrimidine metabolism; UMP biosynthesis via de novo pathway; (S)-dihydroorotate from bicarbonate: step 2/3. Its function is as follows. Catalyzes the condensation of carbamoyl phosphate and aspartate to form carbamoyl aspartate and inorganic phosphate, the committed step in the de novo pyrimidine nucleotide biosynthesis pathway. The chain is Aspartate carbamoyltransferase catalytic subunit from Parafrankia sp. (strain EAN1pec).